A 732-amino-acid polypeptide reads, in one-letter code: Catalase-peroxidase (732 aa).

An N-terminal signal peptide occupies residues 1-45; sequence MDTKVDNAGKCPVVHTHTAHGGRSNRDWWPNQLNLRILHQNSSLS. The segment at residues 97–220 is a cross-link (tryptophyl-tyrosyl-methioninium (Trp-Tyr) (with M-246)); it reads WHSAGTYRTG…LSAVQMGLIY (124 aa). The active-site Proton acceptor is H98. A cross-link (tryptophyl-tyrosyl-methioninium (Tyr-Met) (with W-97)) is located at residues 220 to 246; it reads YVNPEGPNGNPDPLAAARDIRETFARM. H261 is a heme b binding site.

This sequence belongs to the peroxidase family. Peroxidase/catalase subfamily. Homodimer or homotetramer. Requires heme b as cofactor. Formation of the three residue Trp-Tyr-Met cross-link is important for the catalase, but not the peroxidase activity of the enzyme.

It carries out the reaction H2O2 + AH2 = A + 2 H2O. It catalyses the reaction 2 H2O2 = O2 + 2 H2O. Its function is as follows. Bifunctional enzyme with both catalase and broad-spectrum peroxidase activity. The protein is Catalase-peroxidase of Rhizobium rhizogenes (strain K84 / ATCC BAA-868) (Agrobacterium radiobacter).